The following is a 312-amino-acid chain: Protein-methionine-sulfoxide reductase catalytic subunit MsrP (312 aa).

The segment at residues 1–47 is a signal peptide (tat-type signal); that stretch reads MLIRRPPDLLPSEITPEPLARGRRALLKGLGAGAALAGLGLPQISQA. Mo-molybdopterin contacts are provided by residues N74, 77-78, C133, T168, N216, R221, and 232-234; these read YE and SAK.

Belongs to the MsrP family. In terms of assembly, heterodimer of a catalytic subunit (MsrP) and a heme-binding subunit (MsrQ). It depends on Mo-molybdopterin as a cofactor. Post-translationally, predicted to be exported by the Tat system. The position of the signal peptide cleavage has not been experimentally proven.

It is found in the periplasm. It catalyses the reaction L-methionyl-[protein] + a quinone + H2O = L-methionyl-(R)-S-oxide-[protein] + a quinol. Functionally, part of the MsrPQ system that repairs oxidized periplasmic proteins containing methionine sulfoxide residues (Met-O), using respiratory chain electrons. Thus protects these proteins from oxidative-stress damage caused by reactive species of oxygen and chlorine generated by the host defense mechanisms. MsrPQ is essential for the maintenance of envelope integrity under bleach stress, rescuing a wide series of structurally unrelated periplasmic proteins from methionine oxidation. The catalytic subunit MsrP is non-stereospecific, being able to reduce both (R-) and (S-) diastereoisomers of methionine sulfoxide. Involved in protection against reactive chlorine species (RCS) generated by chlorite and hypochlorite. This chain is Protein-methionine-sulfoxide reductase catalytic subunit MsrP, found in Azospira oryzae (strain ATCC BAA-33 / DSM 13638 / PS) (Dechlorosoma suillum).